The following is a 173-amino-acid chain: MSIILGIDPGSRITGYGVIRQQGRHLQYLGSGCIRTSEKELPGRLKQIYAGVTEIITQFQPDVFAIEQVFMAKNADSALKLGQARGSAIVAAVNADLPVYEYAARLIKQAVVGTGGADKVQVQHMVQHMLKLPAKPQADAADALGVAICHANTNKTLVALAGKASSARKGRYR.

Active-site residues include Asp8, Glu67, and Asp139. The Mg(2+) site is built by Asp8, Glu67, and Asp139.

The protein belongs to the RuvC family. In terms of assembly, homodimer which binds Holliday junction (HJ) DNA. The HJ becomes 2-fold symmetrical on binding to RuvC with unstacked arms; it has a different conformation from HJ DNA in complex with RuvA. In the full resolvosome a probable DNA-RuvA(4)-RuvB(12)-RuvC(2) complex forms which resolves the HJ. It depends on Mg(2+) as a cofactor.

The protein resides in the cytoplasm. The catalysed reaction is Endonucleolytic cleavage at a junction such as a reciprocal single-stranded crossover between two homologous DNA duplexes (Holliday junction).. Functionally, the RuvA-RuvB-RuvC complex processes Holliday junction (HJ) DNA during genetic recombination and DNA repair. Endonuclease that resolves HJ intermediates. Cleaves cruciform DNA by making single-stranded nicks across the HJ at symmetrical positions within the homologous arms, yielding a 5'-phosphate and a 3'-hydroxyl group; requires a central core of homology in the junction. The consensus cleavage sequence is 5'-(A/T)TT(C/G)-3'. Cleavage occurs on the 3'-side of the TT dinucleotide at the point of strand exchange. HJ branch migration catalyzed by RuvA-RuvB allows RuvC to scan DNA until it finds its consensus sequence, where it cleaves and resolves the cruciform DNA. The polypeptide is Crossover junction endodeoxyribonuclease RuvC (Vibrio parahaemolyticus serotype O3:K6 (strain RIMD 2210633)).